Consider the following 325-residue polypeptide: Transaldolase (325 aa).

Lys-125 acts as the Schiff-base intermediate with substrate in catalysis.

The protein belongs to the transaldolase family. Type 2 subfamily.

It localises to the cytoplasm. It carries out the reaction D-sedoheptulose 7-phosphate + D-glyceraldehyde 3-phosphate = D-erythrose 4-phosphate + beta-D-fructose 6-phosphate. It functions in the pathway carbohydrate degradation; pentose phosphate pathway; D-glyceraldehyde 3-phosphate and beta-D-fructose 6-phosphate from D-ribose 5-phosphate and D-xylulose 5-phosphate (non-oxidative stage): step 2/3. Functionally, transaldolase is important for the balance of metabolites in the pentose-phosphate pathway. This is Transaldolase from Campylobacter jejuni subsp. jejuni serotype O:6 (strain 81116 / NCTC 11828).